Here is a 521-residue protein sequence, read N- to C-terminus: GMP synthase [glutamine-hydrolyzing] (521 aa).

A Glutamine amidotransferase type-1 domain is found at 8–203 (KILILDFGAQ…VVDICGCQTL (196 aa)). Residue Cys85 is the Nucleophile of the active site. Residues His177 and Glu179 contribute to the active site. Positions 204–396 (WTAANIIDDQ…LGLPRTMVYR (193 aa)) constitute a GMPS ATP-PPase domain. 231 to 237 (SGGVDSS) provides a ligand contact to ATP.

Homodimer.

The catalysed reaction is XMP + L-glutamine + ATP + H2O = GMP + L-glutamate + AMP + diphosphate + 2 H(+). It participates in purine metabolism; GMP biosynthesis; GMP from XMP (L-Gln route): step 1/1. Its function is as follows. Catalyzes the synthesis of GMP from XMP. The chain is GMP synthase [glutamine-hydrolyzing] from Xanthomonas oryzae pv. oryzae (strain MAFF 311018).